A 213-amino-acid chain; its full sequence is Orotate phosphoribosyltransferase (213 aa).

Lysine 26 is a binding site for 5-phospho-alpha-D-ribose 1-diphosphate. 34–35 (FF) contacts orotate. 5-phospho-alpha-D-ribose 1-diphosphate-binding positions include 72–73 (YK), arginine 99, lysine 100, lysine 103, histidine 105, and 124–132 (DDVITAGTA). Positions 128 and 156 each coordinate orotate.

The protein belongs to the purine/pyrimidine phosphoribosyltransferase family. PyrE subfamily. Homodimer. Mg(2+) is required as a cofactor.

It carries out the reaction orotidine 5'-phosphate + diphosphate = orotate + 5-phospho-alpha-D-ribose 1-diphosphate. Its pathway is pyrimidine metabolism; UMP biosynthesis via de novo pathway; UMP from orotate: step 1/2. Functionally, catalyzes the transfer of a ribosyl phosphate group from 5-phosphoribose 1-diphosphate to orotate, leading to the formation of orotidine monophosphate (OMP). This Vibrio parahaemolyticus serotype O3:K6 (strain RIMD 2210633) protein is Orotate phosphoribosyltransferase.